The primary structure comprises 496 residues: Glycerol kinase (496 aa).

Thr-12 is an ADP binding site. ATP is bound by residues Thr-12, Thr-13, and Ser-14. Thr-12 lines the sn-glycerol 3-phosphate pocket. Position 16 (Arg-16) interacts with ADP. The sn-glycerol 3-phosphate site is built by Arg-82, Glu-83, and Tyr-134. Glycerol-binding residues include Arg-82, Glu-83, and Tyr-134. His-230 is modified (phosphohistidine; by HPr). Asp-244 lines the sn-glycerol 3-phosphate pocket. Glycerol is bound by residues Asp-244 and Gln-245. ADP is bound by residues Thr-266 and Gly-309. Residues Thr-266, Gly-309, Gln-313, and Gly-410 each coordinate ATP. Residues Gly-410 and Asn-414 each coordinate ADP.

This sequence belongs to the FGGY kinase family. Homotetramer and homodimer (in equilibrium). Post-translationally, the phosphoenolpyruvate-dependent sugar phosphotransferase system (PTS), including enzyme I, and histidine-containing protein (HPr) are required for the phosphorylation, which leads to the activation of the enzyme.

It carries out the reaction glycerol + ATP = sn-glycerol 3-phosphate + ADP + H(+). Its pathway is polyol metabolism; glycerol degradation via glycerol kinase pathway; sn-glycerol 3-phosphate from glycerol: step 1/1. With respect to regulation, activated by phosphorylation and inhibited by fructose 1,6-bisphosphate (FBP). Its function is as follows. Key enzyme in the regulation of glycerol uptake and metabolism. Catalyzes the phosphorylation of glycerol to yield sn-glycerol 3-phosphate. The protein is Glycerol kinase of Bacillus licheniformis (strain ATCC 14580 / DSM 13 / JCM 2505 / CCUG 7422 / NBRC 12200 / NCIMB 9375 / NCTC 10341 / NRRL NRS-1264 / Gibson 46).